A 280-amino-acid chain; its full sequence is uncharacterized protein (280 aa).

Positions M1–A35 are cleaved as a signal peptide.

This is an uncharacterized protein from Treponema pallidum (strain Nichols).